The primary structure comprises 227 residues: PKHD-type hydroxylase Bpro_3048 (227 aa).

The Fe2OG dioxygenase domain occupies 78-179; sequence KIFTPRINRY…RLACFFWVES (102 aa). Fe cation-binding residues include His-97, Asp-99, and His-160. Residue Arg-170 participates in 2-oxoglutarate binding.

Requires Fe(2+) as cofactor. L-ascorbate serves as cofactor.

The protein is PKHD-type hydroxylase Bpro_3048 of Polaromonas sp. (strain JS666 / ATCC BAA-500).